The following is a 102-amino-acid chain: Large ribosomal subunit protein bL21 (102 aa).

Positions Arg79–Pro91 are enriched in basic residues. Positions Arg79–Ala102 are disordered.

The protein belongs to the bacterial ribosomal protein bL21 family. As to quaternary structure, part of the 50S ribosomal subunit. Contacts protein L20.

In terms of biological role, this protein binds to 23S rRNA in the presence of protein L20. In Staphylococcus carnosus (strain TM300), this protein is Large ribosomal subunit protein bL21.